Consider the following 203-residue polypeptide: Thymidylate kinase (203 aa).

14–21 (GMDGIGKS) contributes to the ATP binding site.

Belongs to the thymidylate kinase family.

It catalyses the reaction dTMP + ATP = dTDP + ADP. Its function is as follows. Phosphorylation of dTMP to form dTDP in both de novo and salvage pathways of dTTP synthesis. This chain is Thymidylate kinase, found in Rickettsia typhi (strain ATCC VR-144 / Wilmington).